Here is a 1600-residue protein sequence, read N- to C-terminus: Eukaryotic translation initiation factor 4 gamma 1 (1600 aa).

Residues 1–88 (MNKAPQPTGP…ARPGPAPHVY (88 aa)) form a disordered region. Pro residues predominate over residues 7–24 (PTGPPPARSPGLPQPAFP). A Phosphoserine modification is found at S15. The span at 34–48 (STPQATQMNTPSQPR) shows a compositional bias: polar residues. Positions 60 to 79 (PSRAQPPSSAASRVQSAAPA) are enriched in low complexity. An omega-N-methylarginine mark is found at R80 and R117. Disordered stretches follow at residues 173 to 230 (NQPP…NGES), 243 to 326 (SQGA…LSPE), 366 to 501 (ETHE…QLSQ), 507 to 526 (AATQ…KELN), and 541 to 606 (VDPA…DQWK). A PABPC1-binding region spans residues 179 to 207 (APKRERKTIRIRDPNQGGKDITEEIMSGA). A compositionally biased stretch (polar residues) spans 208–220 (RTASTPTPPQTGG). T214 carries the post-translational modification Phosphothreonine. S230 is modified (phosphoserine). Residues 269–280 (SPSPTPSPPPIL) show a composition bias toward pro residues. The residue at position 324 (S324) is a Phosphoserine. The span at 438-449 (KVSSAALASILS) shows a compositional bias: low complexity. Acidic residues predominate over residues 463 to 479 (QEEEMEEDDDDEEGGEA). Residues 551-562 (QPPTGSNPSPES) are compositionally biased toward polar residues. Basic and acidic residues-rich tracts occupy residues 578–587 (WDSKEDKIHN) and 596–606 (QKYEYKSDQWK). Residue K606 is modified to N6-acetyllysine. An EIF4E-binding region spans residues 611 to 622 (EEKKRYDREFLL). T651 bears the Phosphothreonine mark. Disordered stretches follow at residues 667–719 (GPDF…TRKI) and 734–760 (AEKA…DGSK). The segment at 686–1089 (GPPRGGPGGE…GSIDSNNQLF (404 aa)) is eIF3/EIF4A-binding. Omega-N-methylarginine occurs at positions 689 and 698. Positions 697-707 (PRGPAGLGPRR) are enriched in low complexity. Positions 745–760 (TAADKDRGEEDADGSK) are enriched in basic and acidic residues. Residues 765–993 (FRRVRSILNK…QDVLDLRQSN (229 aa)) form the MIF4G domain. 2 disordered regions span residues 1029-1117 (AKGS…SEAT) and 1129-1238 (QQTL…AALS). At S1032 the chain carries Phosphoserine. Omega-N-methylarginine is present on residues R1036 and R1046. Phosphoserine is present on residues S1081 and S1096. An N6-acetyllysine modification is found at K1099. Phosphoserine occurs at positions 1147 and 1149. The segment covering 1148–1180 (LSRERGEKAGDRGDRLERSERGGDRGDRLDRAR) has biased composition (basic and acidic residues). S1187 bears the Phosphoserine; by PKC/PRKCA mark. Residues 1188–1225 (FSKEVEERSRERPSQPEGLRKAASLTEDRGRDPVKREA) are compositionally biased toward basic and acidic residues. Phosphoserine occurs at positions 1189, 1196, and 1211. T1213 is modified (phosphothreonine). Phosphoserine is present on residues S1231 and S1238. In terms of domain architecture, MI spans 1241–1363 (EVEKKSKAII…PMGELFREIT (123 aa)). Residues 1429–1599 (ESEAPGQRTL…REAEDEESDH (171 aa)) form the W2 domain. An EIF4A-binding region spans residues 1450 to 1600 (LLKDGGSNQR…EAEDEESDHN (151 aa)). The necessary but not sufficient for MKNK1-binding stretch occupies residues 1585–1600 (FFNWLREAEDEESDHN). S1597 bears the Phosphoserine mark.

Belongs to the eukaryotic initiation factor 4G family. EIF4F is a multi-subunit complex, the composition of which varies with external and internal environmental conditions. It is composed of at least EIF4A, EIF4E (cap-binding) and EIF4G1/EIF4G3. Interacts with eIF3 complex, mutually exclusive with EIF4A1 or EIF4A2, EIF4E and through its N-terminus with PABPC1. Interacts with EIF4E or with EIF1 (mutually exclusive) through a common binding site. Interacts through its C-terminus with the serine/threonine kinases MKNK1, and with MKNK2. Appears to act as a scaffold protein, holding these enzymes in place to phosphorylate EIF4E. Non-phosphorylated EIF4EBP1 competes with EIF4G1/EIF4G3 to interact with EIF4E; insulin stimulated MAP-kinase (MAPK1 and MAPK3) phosphorylation of EIF4EBP1 causes dissociation of the complex allowing EIF4G1/EIF4G3 to bind and consequent initiation of translation. EIF4G1/EIF4G3 interacts with PABPC1 to bring about circularization of the mRNA. Interacts with EIF4E3. Interacts with CIRBP and MIF4GD. Interacts with RBM4. Interacts with HNRNPD/AUF1; the interaction requires RNA. Interacts with DDX3X; the interaction requires RNA. Interacts with DAZAP2. As to quaternary structure, (Microbial infection) Interacts with murine norovirus viral genome-linked protein (via C-terminus); this interaction plays a role in translation of viral proteins. Phosphorylated at multiple sites in vivo. Phosphorylation at Ser-1187 by PRKCA induces binding to MKNK1.

The protein localises to the cytoplasm. The protein resides in the nucleus. It localises to the stress granule. Functionally, component of the protein complex eIF4F, which is involved in the recognition of the mRNA cap, ATP-dependent unwinding of 5'-terminal secondary structure and recruitment of mRNA to the ribosome. Exists in two complexes, either with EIF1 or with EIF4E (mutually exclusive). Together with EIF1, is required for leaky scanning, in particular for avoiding cap-proximal start codon. Together with EIF4E, antagonizes the scanning promoted by EIF1-EIF4G1 and locates the start codon (through a TISU element) without scanning. As a member of the eIF4F complex, required for endoplasmic reticulum stress-induced ATF4 mRNA translation. This chain is Eukaryotic translation initiation factor 4 gamma 1 (Eif4g1), found in Mus musculus (Mouse).